We begin with the raw amino-acid sequence, 214 residues long: Cytochrome c biogenesis ATP-binding export protein CcmA (214 aa).

The 211-residue stretch at 4 to 214 folds into the ABC transporter domain; that stretch reads LAVDQLTVSR…FDHGFDGAFL (211 aa). 36–43 contacts ATP; that stretch reads GPNGIGKT.

This sequence belongs to the ABC transporter superfamily. CcmA exporter (TC 3.A.1.107) family. As to quaternary structure, the complex is composed of two ATP-binding proteins (CcmA) and two transmembrane proteins (CcmB).

It localises to the cell inner membrane. It catalyses the reaction heme b(in) + ATP + H2O = heme b(out) + ADP + phosphate + H(+). Functionally, part of the ABC transporter complex CcmAB involved in the biogenesis of c-type cytochromes; once thought to export heme, this seems not to be the case, but its exact role is uncertain. Responsible for energy coupling to the transport system. The chain is Cytochrome c biogenesis ATP-binding export protein CcmA from Rhodobacter capsulatus (strain ATCC BAA-309 / NBRC 16581 / SB1003).